Here is a 260-residue protein sequence, read N- to C-terminus: CD320 antigen (260 aa).

The first 28 residues, 1-28 (MARGGAGRAVALGLVLRLLFGLRTGLEA), serve as a signal peptide directing secretion. At 29-208 (APAPAHTRVQ…DSSRNPSAYG (180 aa)) the chain is on the extracellular side. Positions 46–83 (SCPTDTFQCLTSGYCVPLSWRCDGDQDCSDGSDEEDCR) constitute an LDL-receptor class A 1 domain. Disulfide bonds link C47–C60, C54–C73, and C67–C82. The Ca(2+) site is built by W65, D68, D70, D72, D78, and E79. A glycan (N-linked (GlcNAc...) asparagine) is linked at N118. The region spanning 123 to 160 (PCQESELHCILDDVCIPHTWRCDGHPDCLDSSDELSCD) is the LDL-receptor class A 2 domain. 3 cysteine pairs are disulfide-bonded: C124-C137, C131-C150, and C144-C159. The Ca(2+) site is built by W142, D145, H147, D149, D155, and E156. An N-linked (GlcNAc...) asparagine glycan is attached at N185. The chain crosses the membrane as a helical span at residues 209–229 (VIAAAGVLSAILVSATLLILL). Residues 230–260 (RLRGQGYLPPPGLLVAVKESLLLSERKTSLI) are Cytoplasmic-facing.

Interacts (via LDL-receptor class A domains) with TCN2.

The protein localises to the cell membrane. Functionally, receptor for transcobalamin saturated with cobalamin (TCbl). Plays an important role in cobalamin uptake. Plasma membrane protein that is expressed on follicular dendritic cells (FDC) and mediates interaction with germinal center B cells. Functions as a costimulator to promote B cell responses to antigenic stimuli; promotes B cell differentiation and proliferation. Germinal center-B (GC-B) cells differentiate into memory B-cells and plasma cells (PC) through interaction with T-cells and follicular dendritic cells (FDC). CD320 augments the proliferation of PC precursors generated by IL-10. This is CD320 antigen (Cd320) from Mus musculus (Mouse).